The sequence spans 361 residues: Phospho-N-acetylmuramoyl-pentapeptide-transferase (361 aa).

10 helical membrane passes run 28-48 (LAIL…IRWL), 73-93 (TMGG…WGNL), 98-118 (MWIM…DDYL), 132-152 (YKLF…YFNP), 168-188 (WLID…VGSS), 199-219 (GLAA…LYIS), 235-255 (GTGE…GFLW), 263-283 (VFMG…LAVI), 288-308 (IVLA…ILQV), and 338-358 (KVIV…LLTL).

The protein belongs to the glycosyltransferase 4 family. MraY subfamily. Mg(2+) is required as a cofactor.

The protein localises to the cell inner membrane. It carries out the reaction UDP-N-acetyl-alpha-D-muramoyl-L-alanyl-gamma-D-glutamyl-meso-2,6-diaminopimeloyl-D-alanyl-D-alanine + di-trans,octa-cis-undecaprenyl phosphate = di-trans,octa-cis-undecaprenyl diphospho-N-acetyl-alpha-D-muramoyl-L-alanyl-D-glutamyl-meso-2,6-diaminopimeloyl-D-alanyl-D-alanine + UMP. Its pathway is cell wall biogenesis; peptidoglycan biosynthesis. Functionally, catalyzes the initial step of the lipid cycle reactions in the biosynthesis of the cell wall peptidoglycan: transfers peptidoglycan precursor phospho-MurNAc-pentapeptide from UDP-MurNAc-pentapeptide onto the lipid carrier undecaprenyl phosphate, yielding undecaprenyl-pyrophosphoryl-MurNAc-pentapeptide, known as lipid I. This Thermodesulfovibrio yellowstonii (strain ATCC 51303 / DSM 11347 / YP87) protein is Phospho-N-acetylmuramoyl-pentapeptide-transferase.